The primary structure comprises 245 residues: Uridylate kinase (245 aa).

14 to 17 provides a ligand contact to ATP; the sequence is KLSG. G56 contacts UMP. ATP-binding residues include G57 and R61. UMP is bound by residues D76 and 137–144; that span reads TGLPFFTT. ATP contacts are provided by T164, Y170, and D173.

It belongs to the UMP kinase family. Homohexamer.

It localises to the cytoplasm. The enzyme catalyses UMP + ATP = UDP + ADP. Its pathway is pyrimidine metabolism; CTP biosynthesis via de novo pathway; UDP from UMP (UMPK route): step 1/1. Inhibited by UTP. Its function is as follows. Catalyzes the reversible phosphorylation of UMP to UDP. The sequence is that of Uridylate kinase from Syntrophobacter fumaroxidans (strain DSM 10017 / MPOB).